The sequence spans 515 residues: 1-pyrroline-5-carboxylate dehydrogenase (515 aa).

Catalysis depends on residues Glu286 and Cys320.

The protein belongs to the aldehyde dehydrogenase family. RocA subfamily.

The enzyme catalyses L-glutamate 5-semialdehyde + NAD(+) + H2O = L-glutamate + NADH + 2 H(+). The protein operates within amino-acid degradation; L-proline degradation into L-glutamate; L-glutamate from L-proline: step 2/2. The sequence is that of 1-pyrroline-5-carboxylate dehydrogenase from Bacillus mycoides (strain KBAB4) (Bacillus weihenstephanensis).